The sequence spans 122 residues: Holo-[acyl-carrier-protein] synthase (122 aa).

Positions 9 and 58 each coordinate Mg(2+).

This sequence belongs to the P-Pant transferase superfamily. AcpS family. Requires Mg(2+) as cofactor.

The protein resides in the cytoplasm. The catalysed reaction is apo-[ACP] + CoA = holo-[ACP] + adenosine 3',5'-bisphosphate + H(+). Transfers the 4'-phosphopantetheine moiety from coenzyme A to a Ser of acyl-carrier-protein. The protein is Holo-[acyl-carrier-protein] synthase of Chlamydia pneumoniae (Chlamydophila pneumoniae).